Consider the following 103-residue polypeptide: Small ribosomal subunit protein uS10 (103 aa).

Belongs to the universal ribosomal protein uS10 family. As to quaternary structure, part of the 30S ribosomal subunit.

Functionally, involved in the binding of tRNA to the ribosomes. In Chlorobium luteolum (strain DSM 273 / BCRC 81028 / 2530) (Pelodictyon luteolum), this protein is Small ribosomal subunit protein uS10.